A 262-amino-acid chain; its full sequence is Adenosylcobinamide-GDP ribazoletransferase (262 aa).

A run of 6 helical transmembrane segments spans residues 43–63 (YFGL…WLTQ), 66–86 (LPAG…TGGF), 120–140 (GAIA…ELAL), 146–166 (AGSA…SIIF), 191–211 (LFIL…LAAL), and 242–262 (AAQQ…GSIL).

Belongs to the CobS family. Mg(2+) serves as cofactor.

It is found in the cell inner membrane. It catalyses the reaction alpha-ribazole + adenosylcob(III)inamide-GDP = adenosylcob(III)alamin + GMP + H(+). The catalysed reaction is alpha-ribazole 5'-phosphate + adenosylcob(III)inamide-GDP = adenosylcob(III)alamin 5'-phosphate + GMP + H(+). The protein operates within cofactor biosynthesis; adenosylcobalamin biosynthesis; adenosylcobalamin from cob(II)yrinate a,c-diamide: step 7/7. Functionally, joins adenosylcobinamide-GDP and alpha-ribazole to generate adenosylcobalamin (Ado-cobalamin). Also synthesizes adenosylcobalamin 5'-phosphate from adenosylcobinamide-GDP and alpha-ribazole 5'-phosphate. This Shewanella putrefaciens (strain CN-32 / ATCC BAA-453) protein is Adenosylcobinamide-GDP ribazoletransferase.